The sequence spans 46 residues: Mu-segestritoxin-Sf1g (46 aa).

4 disulfides stabilise this stretch: Cys-3–Cys-19, Cys-10–Cys-22, Cys-18–Cys-42, and Cys-24–Cys-40. Residues 31–33 (RPW) are keys region for toxin activity.

This sequence belongs to the neurotoxin 16 (SFI) family. Expressed by the venom gland.

Its subcellular location is the secreted. Insecticidal toxin. It inhibits insect voltage-gated sodium channels (Nav) by partially blocking the channel pore in DUM neurons from the American cockroach, not by acting as a gating modifier. The inhibition is only partially reversible after prolonged washout. In vivo, the toxin causes flaccid paralysis followed by death when injected into Heliothis virescens larvae. It also causes uncoordinated movements followed by full paralysis to sheep blowflies (Lucilia cuprina). When the toxin is fused to snowdrop lectin, it is orally active against larvae of the tomato moth (Laconobia oleracea), the rice brown planthopper (Nilaparvata lugens), and the peach-potato aphid (Myzus persicae). The chain is Mu-segestritoxin-Sf1g from Segestria florentina (Tube-web spider).